Here is a 21-residue protein sequence, read N- to C-terminus: 40 kDa major outer membrane protein (21 aa).

In terms of assembly, disulfide bond interactions within and between MOMP molecules and other components form high molecular-weight oligomers.

The protein resides in the cell outer membrane. Structural rigidity of the outer membrane of elementary bodies and porin forming, permitting diffusion of solutes through the intracellular reticulate body membrane. This chain is 40 kDa major outer membrane protein, found in Actinobacillus pleuropneumoniae (Haemophilus pleuropneumoniae).